The primary structure comprises 215 residues: Extracellular small neutral protease (215 aa).

The first 30 residues, 1 to 30, serve as a signal peptide directing secretion; the sequence is MRMTRAASALAGLGLAVAAALGSVAPASAA. Thr152 is a binding site for Ca(2+). His157 provides a ligand contact to Zn(2+). Glu158 is a catalytic residue. Zn(2+) is bound by residues His161 and Asp167. The cysteines at positions 173 and 186 are disulfide-linked.

It belongs to the peptidase M7 family. Zn(2+) is required as a cofactor.

It localises to the secreted. It carries out the reaction Hydrolyzes proteins with a preference for Tyr or Phe in the P1' position. Has no action on amino-acid p-nitroanilides.. In Streptomyces coelicolor, this protein is Extracellular small neutral protease (snpA).